A 363-amino-acid chain; its full sequence is MNGSPTPKRYSSKSSRLYDDYYNIPYQYSNPTPMNRDYNDVGSRINADKLVPEEYKRNTEFINKAVQQNKELNFKLREKQNEIFELKKIAETLRSKLEKYVDITKKLENQNLNLQIKISDLEKKLSDANSTFKEMRFPKVKDPMVDDDPVSENYDQINVPKHRAPDATGNPRTTNKVSNTSDQDSRLKAIERTLSVLTNYVMRSEDGNNDRMSPLPSPLNTISPINNRLNFQEPKRYNPTVKVNPSDDDIMMYESAELKRVEEEIEELKRKILVRKKHDLRKLSLNNQLQELQSMMDGDDNIKLDNVSKHNHATHRHSSQSSRDYSPSSDACLECSNDLYEKNRVKPENNMSETFATPTPNNR.

Positions 62 to 136 (INKAVQQNKE…DANSTFKEMR (75 aa)) form a coiled coil. Residues 160-184 (PKHRAPDATGNPRTTNKVSNTSDQD) form a disordered region. Polar residues predominate over residues 170–182 (NPRTTNKVSNTSD). 4 positions are modified to phosphoserine: serine 213, serine 217, serine 284, and serine 329. Residues 248–297 (DDIMMYESAELKRVEEEIEELKRKILVRKKHDLRKLSLNNQLQELQSMMD) are a coiled coil. The tract at residues 310–363 (HNHATHRHSSQSSRDYSPSSDACLECSNDLYEKNRVKPENNMSETFATPTPNNR) is disordered. Positions 319-329 (SQSSRDYSPSS) are enriched in low complexity. Residues 349–363 (NNMSETFATPTPNNR) are compositionally biased toward polar residues.

The protein belongs to the SPC42 family. In terms of assembly, component of the SPC110 complex containing at least CMD1, SPC29, SPC42 and SCP110.

The protein localises to the nucleus. Its subcellular location is the cytoplasm. The protein resides in the cytoskeleton. It localises to the microtubule organizing center. It is found in the spindle pole body. Functionally, forms a polymeric layer at the periphery of the spindle pole body (SPB) central plaque which has an essential function during SPB duplication and may facilitate attachment of the SPB to the nuclear membrane. The chain is Spindle pole body component SPC42 (SPC42) from Saccharomyces cerevisiae (strain FostersO) (Baker's yeast).